We begin with the raw amino-acid sequence, 287 residues long: Probable endoribonuclease YicC (287 aa).

The protein belongs to the YicC/YloC family. Requires a divalent metal cation as cofactor.

Its function is as follows. Probably a ssRNA endonuclease. Might contribute to small RNA (sRNA) regulation. This chain is Probable endoribonuclease YicC, found in Haemophilus influenzae (strain ATCC 51907 / DSM 11121 / KW20 / Rd).